We begin with the raw amino-acid sequence, 1173 residues long: Pyruvate-flavodoxin oxidoreductase (1173 aa).

4Fe-4S ferredoxin-type domains follow at residues asparagine 681–isoleucine 710 and tyrosine 735–leucine 766. Positions 690, 693, 696, 700, 744, 747, 750, 754, 810, 813, and 838 each coordinate [4Fe-4S] cluster. Basic and acidic residues predominate over residues glycine 922–glycine 933. Positions glycine 922–arginine 946 are disordered. Cysteine 1075 provides a ligand contact to [4Fe-4S] cluster.

The protein belongs to the pyruvate:ferredoxin/flavodoxin oxidoreductase family. It depends on [4Fe-4S] cluster as a cofactor.

It catalyses the reaction oxidized [flavodoxin] + pyruvate + CoA + 2 H(+) = reduced [flavodoxin] + acetyl-CoA + CO2. Functionally, oxidoreductase required for the transfer of electrons from pyruvate to flavodoxin, which reduces nitrogenase. The sequence is that of Pyruvate-flavodoxin oxidoreductase (nifJ) from Enterobacter agglomerans (Erwinia herbicola).